A 228-amino-acid polypeptide reads, in one-letter code: PKHD-type hydroxylase XCV3086 (228 aa).

Positions 78–180 (RIYPPLFNRY…RVACFFWTQS (103 aa)) constitute a Fe2OG dioxygenase domain. Histidine 96, aspartate 98, and histidine 161 together coordinate Fe cation. Arginine 171 is a 2-oxoglutarate binding site.

Requires Fe(2+) as cofactor. The cofactor is L-ascorbate.

The polypeptide is PKHD-type hydroxylase XCV3086 (Xanthomonas euvesicatoria pv. vesicatoria (strain 85-10) (Xanthomonas campestris pv. vesicatoria)).